We begin with the raw amino-acid sequence, 486 residues long: NADH-quinone oxidoreductase subunit N 1 (486 aa).

14 helical membrane-spanning segments follow: residues phenylalanine 15–isoleucine 35, isoleucine 46–glycine 66, methionine 72–leucine 92, tyrosine 111–serine 128, leucine 131–tyrosine 151, phenylalanine 166–leucine 186, phenylalanine 208–proline 228, proline 241–leucine 261, glutamine 276–leucine 296, methionine 303–serine 323, methionine 331–leucine 351, alanine 375–phenylalanine 395, isoleucine 410–valine 432, and phenylalanine 455–leucine 475.

This sequence belongs to the complex I subunit 2 family. As to quaternary structure, NDH-1 is composed of 14 different subunits. Subunits NuoA, H, J, K, L, M, N constitute the membrane sector of the complex.

The protein localises to the cell inner membrane. The catalysed reaction is a quinone + NADH + 5 H(+)(in) = a quinol + NAD(+) + 4 H(+)(out). NDH-1 shuttles electrons from NADH, via FMN and iron-sulfur (Fe-S) centers, to quinones in the respiratory chain. The immediate electron acceptor for the enzyme in this species is believed to be ubiquinone. Couples the redox reaction to proton translocation (for every two electrons transferred, four hydrogen ions are translocated across the cytoplasmic membrane), and thus conserves the redox energy in a proton gradient. The sequence is that of NADH-quinone oxidoreductase subunit N 1 from Solibacter usitatus (strain Ellin6076).